A 43-amino-acid chain; its full sequence is SCAGSCKCKNCRCRSCRKSCCSCCPAGCNNCAKGCVCKEPASS.

The segment at 1–16 (SCAGSCKCKNCRCRSC) is beta. Positions 2, 6, 8, 11, 13, 16, 20, 21, 23, 24, 28, 31, 35, and 37 each coordinate a divalent metal cation. The alpha stretch occupies residues 17–43 (RKSCCSCCPAGCNNCAKGCVCKEPASS).

The protein belongs to the metallothionein superfamily. Type 1 family.

Its function is as follows. Metallothioneins have a high content of cysteine residues that bind various heavy metals. This Colinus virginianus (Northern bobwhite) protein is Metallothionein A.